The chain runs to 640 residues: Threonine--tRNA ligase (640 aa).

The TGS domain occupies 1–61 (MPVITLPDGS…SNDATLQIIT (61 aa)). A catalytic region spans residues 242-533 (DHRKIGKQLD…LIEHYAGVFP (292 aa)). Zn(2+) contacts are provided by Cys-333, His-384, and His-510.

Belongs to the class-II aminoacyl-tRNA synthetase family. In terms of assembly, homodimer. Zn(2+) serves as cofactor.

Its subcellular location is the cytoplasm. It catalyses the reaction tRNA(Thr) + L-threonine + ATP = L-threonyl-tRNA(Thr) + AMP + diphosphate + H(+). Its function is as follows. Catalyzes the attachment of threonine to tRNA(Thr) in a two-step reaction: L-threonine is first activated by ATP to form Thr-AMP and then transferred to the acceptor end of tRNA(Thr). Also edits incorrectly charged L-seryl-tRNA(Thr). The polypeptide is Threonine--tRNA ligase (Pseudomonas putida (strain GB-1)).